A 126-amino-acid polypeptide reads, in one-letter code: Histone H2B type 1-B (126 aa).

A compositionally biased stretch (low complexity) spans Met-1–Lys-12. Residues Met-1–Glu-36 are disordered. At Pro-2 the chain carries N-acetylproline. Glu-3 carries the ADP-ribosyl glutamic acid modification. N6-(2-hydroxyisobutyryl)lysine; alternate is present on Lys-6. Lys-6 is modified (N6-(beta-hydroxybutyryl)lysine; alternate). Lys-6 carries the post-translational modification N6-acetyllysine; alternate. Lys-6 bears the N6-butyryllysine; alternate mark. Lys-6 carries the N6-crotonyllysine; alternate modification. Lys-6 carries the post-translational modification N6-lactoyllysine; alternate. Lys-6 participates in a covalent cross-link: Glycyl lysine isopeptide (Lys-Gly) (interchain with G-Cter in SUMO2); alternate. Ser-7 carries the ADP-ribosylserine modification. At Lys-12 the chain carries N6-(beta-hydroxybutyryl)lysine; alternate. Lys-12 and Lys-13 each carry N6-acetyllysine; alternate. N6-crotonyllysine; alternate occurs at positions 12 and 13. Lys-12 is subject to N6-lactoyllysine; alternate. Lys-13 is subject to N6-(2-hydroxyisobutyryl)lysine; alternate. Ser-15 carries the phosphoserine; by STK4/MST1 modification. Residues Lys-16, Lys-17, Lys-21, and Lys-24 each carry the N6-acetyllysine; alternate modification. An N6-crotonyllysine; alternate mark is found at Lys-16, Lys-17, Lys-21, and Lys-24. N6-lactoyllysine; alternate is present on residues Lys-16, Lys-17, Lys-21, and Lys-24. The residue at position 17 (Lys-17) is an N6-glutaryllysine; alternate. N6-(2-hydroxyisobutyryl)lysine; alternate occurs at positions 21 and 24. Lys-21 bears the N6-(beta-hydroxybutyryl)lysine; alternate mark. An N6-butyryllysine; alternate modification is found at Lys-21. A Glycyl lysine isopeptide (Lys-Gly) (interchain with G-Cter in SUMO2); alternate cross-link involves residue Lys-21. At Lys-25 the chain carries N6-(2-hydroxyisobutyryl)lysine. An N6-(2-hydroxyisobutyryl)lysine; alternate modification is found at Lys-35. Lys-35 is modified (N6-(beta-hydroxybutyryl)lysine; alternate). Lys-35 carries the N6-crotonyllysine; alternate modification. Lys-35 is subject to N6-glutaryllysine; alternate. Lys-35 carries the N6-succinyllysine; alternate modification. Lys-35 is covalently cross-linked (Glycyl lysine isopeptide (Lys-Gly) (interchain with G-Cter in ubiquitin); alternate). At Glu-36 the chain carries PolyADP-ribosyl glutamic acid. Ser-37 bears the Phosphoserine; by AMPK mark. Lys-44, Lys-47, and Lys-58 each carry N6-(2-hydroxyisobutyryl)lysine; alternate. Position 44 is an N6-lactoyllysine; alternate (Lys-44). 2 positions are modified to N6-glutaryllysine; alternate: Lys-44 and Lys-47. Lys-47 carries the post-translational modification N6-methyllysine; alternate. Lys-58 carries the post-translational modification N6,N6-dimethyllysine; alternate. Arg-80 carries the dimethylated arginine modification. Lys-86 is subject to N6-(2-hydroxyisobutyryl)lysine; alternate. Residue Lys-86 is modified to N6-acetyllysine; alternate. Lys-86 is subject to N6-lactoyllysine; alternate. The residue at position 86 (Lys-86) is an N6,N6,N6-trimethyllysine; alternate. Omega-N-methylarginine occurs at positions 87 and 93. Lys-109 carries the post-translational modification N6-(2-hydroxyisobutyryl)lysine; alternate. Lys-109 carries the N6-(beta-hydroxybutyryl)lysine; alternate modification. Lys-109 is subject to N6-lactoyllysine; alternate. Residue Lys-109 is modified to N6-glutaryllysine; alternate. Lys-109 bears the N6-methyllysine; alternate mark. An O-linked (GlcNAc) serine glycan is attached at Ser-113. Thr-116 bears the Phosphothreonine mark. An N6-(2-hydroxyisobutyryl)lysine; alternate mark is found at Lys-117 and Lys-121. Lys-117 is modified (N6-(beta-hydroxybutyryl)lysine; alternate). N6-lactoyllysine; alternate occurs at positions 117 and 121. N6-glutaryllysine; alternate occurs at positions 117 and 121. 2 positions are modified to N6-succinyllysine; alternate: Lys-117 and Lys-121. Position 117 is an N6-methylated lysine; alternate (Lys-117). Lys-121 is covalently cross-linked (Glycyl lysine isopeptide (Lys-Gly) (interchain with G-Cter in ubiquitin); alternate).

The protein belongs to the histone H2B family. As to quaternary structure, the nucleosome is a histone octamer containing two molecules each of H2A, H2B, H3 and H4 assembled in one H3-H4 heterotetramer and two H2A-H2B heterodimers. The octamer wraps approximately 147 bp of DNA. Post-translationally, monoubiquitination at Lys-35 (H2BK34Ub) by the MSL1/MSL2 dimer is required for histone H3 'Lys-4' (H3K4me) and 'Lys-79' (H3K79me) methylation and transcription activation at specific gene loci, such as HOXA9 and MEIS1 loci. Similarly, monoubiquitination at Lys-121 (H2BK120Ub) by the RNF20/40 complex gives a specific tag for epigenetic transcriptional activation and is also prerequisite for histone H3 'Lys-4' and 'Lys-79' methylation. It also functions cooperatively with the FACT dimer to stimulate elongation by RNA polymerase II. H2BK120Ub also acts as a regulator of mRNA splicing: deubiquitination by USP49 is required for efficient cotranscriptional splicing of a large set of exons. In terms of processing, phosphorylated on Ser-15 (H2BS14ph) by STK4/MST1 during apoptosis; which facilitates apoptotic chromatin condensation. Also phosphorylated on Ser-15 in response to DNA double strand breaks (DSBs), and in correlation with somatic hypermutation and immunoglobulin class-switch recombination. Phosphorylation at Ser-37 (H2BS36ph) by AMPK in response to stress promotes transcription. GlcNAcylation at Ser-113 promotes monoubiquitination of Lys-121. It fluctuates in response to extracellular glucose, and associates with transcribed genes. Post-translationally, ADP-ribosylated by PARP1 or PARP2 on Ser-7 (H2BS6ADPr) in response to DNA damage. H2BS6ADPr promotes recruitment of CHD1L. Mono-ADP-ribosylated on Glu-3 (H2BE2ADPr) by PARP3 in response to single-strand breaks. Poly ADP-ribosylation on Glu-36 (H2BE35ADPr) by PARP1 regulates adipogenesis: it inhibits phosphorylation at Ser-37 (H2BS36ph), thereby blocking expression of pro-adipogenetic genes. In terms of processing, hydroxybutyrylation of histones is induced by starvation. Crotonylation (Kcr) is specifically present in male germ cells and marks testis-specific genes in post-meiotic cells, including X-linked genes that escape sex chromosome inactivation in haploid cells. Crotonylation marks active promoters and enhancers and confers resistance to transcriptional repressors. It is also associated with post-meiotically activated genes on autosomes. Post-translationally, lactylated in macrophages by EP300/P300 by using lactoyl-CoA directly derived from endogenous or exogenous lactate, leading to stimulates gene transcription.

The protein localises to the nucleus. It is found in the chromosome. In terms of biological role, core component of nucleosome. Nucleosomes wrap and compact DNA into chromatin, limiting DNA accessibility to the cellular machineries which require DNA as a template. Histones thereby play a central role in transcription regulation, DNA repair, DNA replication and chromosomal stability. DNA accessibility is regulated via a complex set of post-translational modifications of histones, also called histone code, and nucleosome remodeling. In Mus musculus (Mouse), this protein is Histone H2B type 1-B.